The chain runs to 306 residues: Protein YIPF1 (306 aa).

The Cytoplasmic segment spans residues 1 to 119 (MAAVDDLQFE…VRLYIRSNPD (119 aa)). Positions 30–63 (IEDPSVSFGHQPRPPGSVGREEDEELLGNNDSDE) are disordered. Positions 50–63 (EEDEELLGNNDSDE) are enriched in acidic residues. The chain crosses the membrane as a helical span at residues 120-140 (LYGPFWICATLVFAIAISGNL). The Lumenal portion of the chain corresponds to 141–162 (SNFLIHLGEKTYHYVPEFQKVS). A helical transmembrane segment spans residues 163–183 (IAATVIYAYAWLVPLALWGFL). Residues 184–200 (LWRNSKVMSMVSYSFLE) lie on the Cytoplasmic side of the membrane. Residues 201–221 (IVCVYGYSLFIYIPTAVLWII) traverse the membrane as a helical segment. The Lumenal portion of the chain corresponds to 222-227 (PQRVVR). A helical membrane pass occupies residues 228–248 (WVLVMIALGVSGSVLVMTFWP). Topologically, residues 249–256 (AVREDNRR) are cytoplasmic. Residues 257-277 (VALATIVTIVLLHVLLSVGCL) form a helical membrane-spanning segment. The Lumenal segment spans residues 278–306 (AYFFDAPEMDHLPAAITTPNQTVTAAKSS). Residue Asn297 is glycosylated (N-linked (GlcNAc...) asparagine).

It belongs to the YIP1 family. As to quaternary structure, interacts with YIPF6; this interaction may stabilize YIPF1. May also form a ternary complex with YIPF2 and YIPF6.

Its subcellular location is the golgi apparatus. The protein resides in the cis-Golgi network membrane. It is found in the trans-Golgi network membrane. The protein localises to the late endosome membrane. This chain is Protein YIPF1 (Yipf1), found in Mus musculus (Mouse).